We begin with the raw amino-acid sequence, 191 residues long: Protein GrpE (191 aa).

The span at 1–14 (MEDQKQTPSNQTAT) shows a compositional bias: polar residues. The interval 1–35 (MEDQKQTPSNQTATPAGDEATSTAAASPETGAPDT) is disordered. Residues 19 to 35 (EATSTAAASPETGAPDT) are compositionally biased toward low complexity.

The protein belongs to the GrpE family. Homodimer.

It is found in the cytoplasm. Functionally, participates actively in the response to hyperosmotic and heat shock by preventing the aggregation of stress-denatured proteins, in association with DnaK and GrpE. It is the nucleotide exchange factor for DnaK and may function as a thermosensor. Unfolded proteins bind initially to DnaJ; upon interaction with the DnaJ-bound protein, DnaK hydrolyzes its bound ATP, resulting in the formation of a stable complex. GrpE releases ADP from DnaK; ATP binding to DnaK triggers the release of the substrate protein, thus completing the reaction cycle. Several rounds of ATP-dependent interactions between DnaJ, DnaK and GrpE are required for fully efficient folding. The protein is Protein GrpE of Cupriavidus taiwanensis (strain DSM 17343 / BCRC 17206 / CCUG 44338 / CIP 107171 / LMG 19424 / R1) (Ralstonia taiwanensis (strain LMG 19424)).